The following is a 186-amino-acid chain: Ribosome maturation factor RimM (186 aa).

The PRC barrel domain maps to 100–182 (NEGEYHVSDL…RIEINPPVGL (83 aa)).

The protein belongs to the RimM family. As to quaternary structure, binds ribosomal protein uS19.

It localises to the cytoplasm. Its function is as follows. An accessory protein needed during the final step in the assembly of 30S ribosomal subunit, possibly for assembly of the head region. Essential for efficient processing of 16S rRNA. May be needed both before and after RbfA during the maturation of 16S rRNA. It has affinity for free ribosomal 30S subunits but not for 70S ribosomes. The polypeptide is Ribosome maturation factor RimM (Rippkaea orientalis (strain PCC 8801 / RF-1) (Cyanothece sp. (strain PCC 8801))).